A 347-amino-acid polypeptide reads, in one-letter code: Phosphate acyltransferase (347 aa).

This sequence belongs to the PlsX family. In terms of assembly, homodimer. Probably interacts with PlsY.

It is found in the cytoplasm. The catalysed reaction is a fatty acyl-[ACP] + phosphate = an acyl phosphate + holo-[ACP]. It functions in the pathway lipid metabolism; phospholipid metabolism. Functionally, catalyzes the reversible formation of acyl-phosphate (acyl-PO(4)) from acyl-[acyl-carrier-protein] (acyl-ACP). This enzyme utilizes acyl-ACP as fatty acyl donor, but not acyl-CoA. The chain is Phosphate acyltransferase from Methylobacillus flagellatus (strain ATCC 51484 / DSM 6875 / VKM B-1610 / KT).